The chain runs to 490 residues: Cell division cycle protein cdt2 (490 aa).

The tract at residues isoleucine 18–lysine 40 is disordered. 6 WD repeats span residues alanine 178–aspartate 208, tyrosine 226–aspartate 257, glycine 285–aspartate 317, lysine 339–serine 369, arginine 387–valine 419, and glycine 435–asparagine 464.

This sequence belongs to the WD repeat cdt2 family. Component of the DCX(DTL) E3 ubiquitin ligase complex, at least composed of cul4, ddb1, cdt2 and pip1.

It localises to the nucleus. It functions in the pathway protein modification; protein ubiquitination. Its function is as follows. Substrate-specific adapter of a DCX (DDB1-CUL4-X-box) E3 ubiquitin-protein ligase complex required for DNA replication during mitosis and meiosis. The DCX(DTL) complex, also named CRL4(CDT2) complex, mediates the polyubiquitination and subsequent degradation of cdt1 and spd1. Involved in the regulation of mitotic and pre-meiotic S-phase progression. This Schizosaccharomyces pombe (strain 972 / ATCC 24843) (Fission yeast) protein is Cell division cycle protein cdt2 (cdt2).